Here is a 639-residue protein sequence, read N- to C-terminus: tRNA-dihydrouridine(47) synthase [NAD(P)(+)]-like (639 aa).

Polar residues-rich tracts occupy residues 1-19 (MAES…TVTQ) and 54-65 (QTCSELSGNDAE). Disordered stretches follow at residues 1–20 (MAES…VTQK) and 52–122 (DKQT…HSQF). Over residues 66–85 (NTVRAEDAAEPEAKRIKLDD) the composition is skewed to basic and acidic residues. Residues 103–119 (EKKRARGQNKSRPHMKH) are compositionally biased toward basic residues. 2 consecutive C3H1-type zinc fingers follow at residues 122–152 (FEEN…HDVA) and 160–190 (EDIR…HLGD). FMN-binding positions include 300–302 (PLT) and Gln354. The active-site Proton donor is Cys385. FMN is bound by residues Lys424, His454, 486-488 (NGD), and 509-510 (AR).

This sequence belongs to the Dus family. Dus3 subfamily. It depends on FMN as a cofactor.

It carries out the reaction 5,6-dihydrouridine(47) in tRNA + NAD(+) = uridine(47) in tRNA + NADH + H(+). The catalysed reaction is 5,6-dihydrouridine(47) in tRNA + NADP(+) = uridine(47) in tRNA + NADPH + H(+). The enzyme catalyses a 5,6-dihydrouridine in mRNA + NAD(+) = a uridine in mRNA + NADH + H(+). It catalyses the reaction a 5,6-dihydrouridine in mRNA + NADP(+) = a uridine in mRNA + NADPH + H(+). Its function is as follows. Catalyzes the synthesis of dihydrouridine, a modified base, in various RNAs, such as tRNAs, mRNAs and some long non-coding RNAs (lncRNAs). Mainly modifies the uridine in position 47 (U47) in the D-loop of most cytoplasmic tRNAs. Also able to mediate the formation of dihydrouridine in some mRNAs, thereby regulating their translation. This Xenopus tropicalis (Western clawed frog) protein is tRNA-dihydrouridine(47) synthase [NAD(P)(+)]-like (dus3l).